A 364-amino-acid polypeptide reads, in one-letter code: Tyrosine--tRNA ligase (364 aa).

Tyr39 contributes to the L-tyrosine binding site. ATP-binding residues include His49 and Trp52. L-tyrosine is bound by residues Tyr165, Gln169, Asp172, and Gln187. Positions 238–242 match the 'KMSKS' region motif; the sequence is KMSKS. Position 241 (Lys241) interacts with ATP.

This sequence belongs to the class-I aminoacyl-tRNA synthetase family. TyrS type 4 subfamily. As to quaternary structure, homodimer.

The protein localises to the cytoplasm. The catalysed reaction is tRNA(Tyr) + L-tyrosine + ATP = L-tyrosyl-tRNA(Tyr) + AMP + diphosphate + H(+). Catalyzes the attachment of tyrosine to tRNA(Tyr) in a two-step reaction: tyrosine is first activated by ATP to form Tyr-AMP and then transferred to the acceptor end of tRNA(Tyr). The chain is Tyrosine--tRNA ligase from Aeropyrum pernix (strain ATCC 700893 / DSM 11879 / JCM 9820 / NBRC 100138 / K1).